We begin with the raw amino-acid sequence, 512 residues long: Cytochrome P450 26B1 (512 aa).

Residue C441 participates in heme binding.

It belongs to the cytochrome P450 family. The cofactor is heme.

Its subcellular location is the endoplasmic reticulum membrane. The protein resides in the microsome membrane. It catalyses the reaction all-trans-retinoate + reduced [NADPH--hemoprotein reductase] + O2 = all-trans-4-hydroxyretinoate + oxidized [NADPH--hemoprotein reductase] + H2O + H(+). The catalysed reaction is all-trans-retinoate + reduced [NADPH--hemoprotein reductase] + O2 = all-trans-18-hydroxyretinoate + oxidized [NADPH--hemoprotein reductase] + H2O + H(+). Functionally, a cytochrome P450 monooxygenase involved in the metabolism of retinoates (RAs), the active metabolites of vitamin A, and critical signaling molecules in animals. RAs exist as at least four different isomers: all-trans-RA (atRA), 9-cis-RA, 13-cis-RA, and 9,13-dicis-RA, where atRA is considered to be the biologically active isomer, although 9-cis-RA and 13-cis-RA also have activity. Catalyzes the hydroxylation of atRA primarily at C-4 and C-18, thereby contributing to the regulation of atRA homeostasis and signaling. Hydroxylation of atRA limits its biological activity and initiates a degradative process leading to its eventual elimination. Involved in the convertion of atRA to all-trans-4-oxo-RA. Can oxidize all-trans-13,14-dihydroretinoate (DRA) to metabolites which could include all-trans-4-oxo-DRA, all-trans-4-hydroxy-DRA, all-trans-5,8-epoxy-DRA, and all-trans-18-hydroxy-DRA. Shows preference for the following substrates: atRA &gt; 9-cis-RA &gt; 13-cis-RA. Plays a central role in germ cell development: acts by degrading RAs in the developing testis, preventing STRA8 expression, thereby leading to delay of meiosis. Required for the maintenance of the undifferentiated state of male germ cells during embryonic development in Sertoli cells, inducing arrest in G0 phase of the cell cycle and preventing meiotic entry. Plays a role in skeletal development, both at the level of patterning and in the ossification of bone and the establishment of some synovial joints. Essential for postnatal survival. Its function is as follows. Also has a significant activity in oxidation of tazarotenic acid and may therefore metabolize that xenobiotic in vivo. In Rattus norvegicus (Rat), this protein is Cytochrome P450 26B1 (Cyp26b1).